We begin with the raw amino-acid sequence, 243 residues long: Carboxy-S-adenosyl-L-methionine synthase (243 aa).

Residues tyrosine 40, 65–67 (GSS), 90–91 (DN), 118–119 (DI), asparagine 133, and arginine 200 each bind S-adenosyl-L-methionine.

Belongs to the class I-like SAM-binding methyltransferase superfamily. Cx-SAM synthase family. Homodimer.

It catalyses the reaction prephenate + S-adenosyl-L-methionine = carboxy-S-adenosyl-L-methionine + 3-phenylpyruvate + H2O. Its function is as follows. Catalyzes the conversion of S-adenosyl-L-methionine (SAM) to carboxy-S-adenosyl-L-methionine (Cx-SAM). In Shewanella denitrificans (strain OS217 / ATCC BAA-1090 / DSM 15013), this protein is Carboxy-S-adenosyl-L-methionine synthase.